Consider the following 284-residue polypeptide: UPF0276 protein PA3283 (284 aa).

This sequence belongs to the UPF0276 family.

This chain is UPF0276 protein PA3283, found in Pseudomonas aeruginosa (strain ATCC 15692 / DSM 22644 / CIP 104116 / JCM 14847 / LMG 12228 / 1C / PRS 101 / PAO1).